Consider the following 455-residue polypeptide: Phosphoglucosamine mutase (455 aa).

Residue Ser-104 is the Phosphoserine intermediate of the active site. Residues Ser-104, Asp-253, Asp-255, and Asp-257 each coordinate Mg(2+). Position 104 is a phosphoserine (Ser-104).

This sequence belongs to the phosphohexose mutase family. The cofactor is Mg(2+). Activated by phosphorylation.

The enzyme catalyses alpha-D-glucosamine 1-phosphate = D-glucosamine 6-phosphate. Functionally, catalyzes the conversion of glucosamine-6-phosphate to glucosamine-1-phosphate. This Psychrobacter cryohalolentis (strain ATCC BAA-1226 / DSM 17306 / VKM B-2378 / K5) protein is Phosphoglucosamine mutase.